Here is an 812-residue protein sequence, read N- to C-terminus: Probable inorganic carbon transporter subunit DabA (812 aa).

The Zn(2+) site is built by C337, D339, H499, and C514.

This sequence belongs to the inorganic carbon transporter (TC 9.A.2) DabA family. In terms of assembly, forms a complex with DabB. The cofactor is Zn(2+).

It is found in the cell inner membrane. Its function is as follows. Part of an energy-coupled inorganic carbon pump. The sequence is that of Probable inorganic carbon transporter subunit DabA from Xanthomonas oryzae pv. oryzae (strain KACC10331 / KXO85).